Consider the following 297-residue polypeptide: N-acetylmuramic acid 6-phosphate etherase (297 aa).

Residues 55 to 218 (AAAALKSGGR…STGAMVKFGK (164 aa)) form the SIS domain. The Proton donor role is filled by glutamate 83. Glutamate 114 is a catalytic residue.

The protein belongs to the GCKR-like family. MurNAc-6-P etherase subfamily. In terms of assembly, homodimer.

It carries out the reaction N-acetyl-D-muramate 6-phosphate + H2O = N-acetyl-D-glucosamine 6-phosphate + (R)-lactate. Its pathway is amino-sugar metabolism; 1,6-anhydro-N-acetylmuramate degradation. The protein operates within amino-sugar metabolism; N-acetylmuramate degradation. It functions in the pathway cell wall biogenesis; peptidoglycan recycling. Specifically catalyzes the cleavage of the D-lactyl ether substituent of MurNAc 6-phosphate, producing GlcNAc 6-phosphate and D-lactate. Together with AnmK, is also required for the utilization of anhydro-N-acetylmuramic acid (anhMurNAc) either imported from the medium or derived from its own cell wall murein, and thus plays a role in cell wall recycling. In Salmonella paratyphi B (strain ATCC BAA-1250 / SPB7), this protein is N-acetylmuramic acid 6-phosphate etherase.